A 427-amino-acid polypeptide reads, in one-letter code: O-methyltransferase sol2 (427 aa).

Asp281 provides a ligand contact to S-adenosyl-L-methionine. Residue His327 is the Proton acceptor of the active site.

This sequence belongs to the class I-like SAM-binding methyltransferase superfamily. Cation-independent O-methyltransferase family. COMT subfamily.

It participates in phytotoxin biosynthesis. Its function is as follows. O-methyltransferase; part of the gene cluster that mediates the biosynthesis of the phytotoxin solanapyrone, a causal agent of early blight disease of potato and tomato. The prosolanapyrone synthase sol1 is a polyketide synthase that produces the octaketide desmethylprosolanapyrone I via sequential condensations of 7 malonyl-CoA units with one acetyl-CoA unit, and one methylation step. The octaketide backbone is further methylated by the sol2 O-methyltransferase to yield prosolanapyrone I. Prosolanapyrone I is hydroxylated to prosolanapyrone II by the cytochrome P450 monooxygenase sol6. The solanapyrone synthase sol5 then catalyzes the oxidation of prosolanapyrone II and the subsequent Diels Alder cycloisomerization of the product prosolanapyrone III to solanapyrones A and D. Solanapyrones A and D are then converted into solanapyrones B and E, respectively, by the sol3 dehydrogenase. The polypeptide is O-methyltransferase sol2 (sol2) (Alternaria solani).